The primary structure comprises 83 residues: Mu-theraphotoxin-Hhn2m (83 aa).

The first 21 residues, M1–A21, serve as a signal peptide directing secretion. Residues S22–R48 constitute a propeptide that is removed on maturation. 3 disulfides stabilise this stretch: C50–C65, C57–C70, and C64–C77. Leucine amide is present on L81.

This sequence belongs to the neurotoxin 10 (Hwtx-1) family. 15 (Hntx-3) subfamily. As to quaternary structure, monomer. As to expression, expressed by the venom gland.

Its subcellular location is the secreted. In terms of biological role, lethal neurotoxin. Selectively blocks tetrodotoxin-sensitive voltage-gated sodium channels (Nav). Does not affect tetrodotoxin-resistant voltage-gated sodium channels or calcium channels. This chain is Mu-theraphotoxin-Hhn2m, found in Cyriopagopus hainanus (Chinese bird spider).